We begin with the raw amino-acid sequence, 248 residues long: Putative transposase YncI (248 aa).

It belongs to the transposase 11 family.

The chain is Putative transposase YncI (yncI) from Escherichia coli (strain K12).